The sequence spans 143 residues: Small ribosomal subunit protein uS12 (143 aa).

A compositionally biased stretch (basic residues) spans 1–19 (MGKPKGIRAARKLKTHRQA). The tract at residues 1 to 21 (MGKPKGIRAARKLKTHRQAQR) is disordered. Hydroxyproline is present on proline 62.

Belongs to the universal ribosomal protein uS12 family. Component of the 40S small ribosomal subunit.

The protein resides in the cytoplasm. It localises to the cytosol. Its subcellular location is the rough endoplasmic reticulum. The chain is Small ribosomal subunit protein uS12 (rps-23) from Brugia malayi (Filarial nematode worm).